We begin with the raw amino-acid sequence, 271 residues long: 2-dehydro-3-deoxyphosphooctonate aldolase (271 aa).

It belongs to the KdsA family.

The protein localises to the cytoplasm. The enzyme catalyses D-arabinose 5-phosphate + phosphoenolpyruvate + H2O = 3-deoxy-alpha-D-manno-2-octulosonate-8-phosphate + phosphate. It functions in the pathway carbohydrate biosynthesis; 3-deoxy-D-manno-octulosonate biosynthesis; 3-deoxy-D-manno-octulosonate from D-ribulose 5-phosphate: step 2/3. The protein operates within bacterial outer membrane biogenesis; lipopolysaccharide biosynthesis. The protein is 2-dehydro-3-deoxyphosphooctonate aldolase of Campylobacter jejuni subsp. jejuni serotype O:23/36 (strain 81-176).